A 145-amino-acid polypeptide reads, in one-letter code: MELHSLKSTPGSRKEKHRKGRGHAAGKGKQAGKGQSGQRKRSKVRLGFEGGQNPWFRRLPKRGFKNINHIEYQPLSLEALEKHFLENEVVDLEKIYEKRLVTKRTLPVKLLANGKLTKKLTIHVHSASQSAIQAVESLGGKVEVL.

The span at 1 to 11 (MELHSLKSTPG) shows a compositional bias: polar residues. Residues 1–48 (MELHSLKSTPGSRKEKHRKGRGHAAGKGKQAGKGQSGQRKRSKVRLGF) are disordered. Positions 14–26 (KEKHRKGRGHAAG) are enriched in basic residues.

It belongs to the universal ribosomal protein uL15 family. Part of the 50S ribosomal subunit.

Its function is as follows. Binds to the 23S rRNA. The protein is Large ribosomal subunit protein uL15 of Mycoplasmopsis pulmonis (strain UAB CTIP) (Mycoplasma pulmonis).